The sequence spans 118 residues: Eukaryotic translation initiation factor 4E-binding protein 1 (118 aa).

At serine 2 the chain carries N-acetylserine. Positions 27–48 are disordered; the sequence is VQLPPGDYSTTPGGTLFSTTPG. A compositionally biased stretch (polar residues) spans 34 to 48; sequence YSTTPGGTLFSTTPG. Threonine 37 carries the post-translational modification Phosphothreonine; by MTOR. At threonine 41 the chain carries Phosphothreonine. Serine 44 bears the Phosphoserine mark. Threonine 46 is subject to Phosphothreonine; by MTOR. Threonine 50 bears the Phosphothreonine mark. The residue at position 54 (tyrosine 54) is a Phosphotyrosine. The YXXXXLphi motif motif lies at 54–60; the sequence is YDRKFLM. Lysine 57 participates in a covalent cross-link: Glycyl lysine isopeptide (Lys-Gly) (interchain with G-Cter in ubiquitin). The segment at 64–118 is disordered; the sequence is NSPVTKTPPRDLPTIPGVTSPTGDEPPTEARQNHLRSSPEDKPAGGEESQFEMDI. Position 65 is a phosphoserine; by DYRK2, MAPK1, MAPK3 and MTOR (serine 65). Threonine 70 is subject to Phosphothreonine; by MTOR. Threonine 77 bears the Phosphothreonine mark. Phosphoserine is present on residues serine 83 and serine 100. Serine 101 is modified (phosphoserine; by DYRK2). Serine 112 is modified (phosphoserine). The TOS motif signature appears at 114–118; sequence FEMDI.

It belongs to the eIF4E-binding protein family. As to quaternary structure, hypophosphorylated EIF4EBP1 competes with EIF4G1/EIF4G3 to interact with EIF4E; insulin stimulated MAP-kinase (MAPK1 and MAPK3) or mTORC1 phosphorylation of EIF4EBP1 causes dissociation of the complex allowing EIF4G1/EIF4G3 to bind and consequent initiation of translation. Interacts (via TOS motif) with RPTOR; promoting phosphorylation by mTORC1. In terms of processing, phosphorylated on serine and threonine residues in response to insulin, EGF and PDGF. Phosphorylation at Thr-37, Thr-46, Ser-65 and Thr-70, corresponding to the hyperphosphorylated form, is regulated by mTORC1 and abolishes binding to EIF4E. Post-translationally, ubiquitinated: when eIF4E levels are low, hypophosphorylated form is ubiquitinated by the BCR(KLHL25) complex, leading to its degradation and serving as a homeostatic mechanism to maintain translation and prevent eIF4E inhibition when eIF4E levels are low. Not ubiquitinated when hyperphosphorylated (at Thr-37, Thr-46, Ser-65 and Thr-70) or associated with eIF4E.

The protein localises to the cytoplasm. The protein resides in the nucleus. Repressor of translation initiation that regulates EIF4E activity by preventing its assembly into the eIF4F complex: hypophosphorylated form competes with EIF4G1/EIF4G3 and strongly binds to EIF4E, leading to repress translation. In contrast, hyperphosphorylated form dissociates from EIF4E, allowing interaction between EIF4G1/EIF4G3 and EIF4E, leading to initiation of translation. Mediates the regulation of protein translation by hormones, growth factors and other stimuli that signal through the MAP kinase and mTORC1 pathways. The polypeptide is Eukaryotic translation initiation factor 4E-binding protein 1 (EIF4EBP1) (Bos taurus (Bovine)).